The sequence spans 479 residues: Poly(A) polymerase catalytic subunit (479 aa).

Catalysis depends on residues Asp-202 and Asp-204. Ca(2+)-binding residues include Asp-202, Asp-204, and Asp-253.

This sequence belongs to the poxviridae poly(A) polymerase catalytic subunit family. In terms of assembly, heterodimer of a large (catalytic) subunit and a small (regulatory) subunit.

It carries out the reaction RNA(n) + ATP = RNA(n)-3'-adenine ribonucleotide + diphosphate. Functionally, polymerase that creates the 3'-poly(A) tail of mRNA's. This Homo sapiens (Human) protein is Poly(A) polymerase catalytic subunit (OPG063).